Reading from the N-terminus, the 119-residue chain is Immunoglobulin heavy variable 2-26 (119 aa).

An N-terminal signal peptide occupies residues 1–19; it reads MDTLCYTLLLLTTPSWVLS. Residue glutamine 20 is modified to Pyrrolidone carboxylic acid. The segment at 20–44 is framework-1; the sequence is QVTLKESGPVLVKPTETLTLTCTVS. An Ig-like domain is found at 20-119; sequence QVTLKESGPV…DTATYYCARI (100 aa). An intrachain disulfide couples cysteine 41 to cysteine 116. Residues 45 to 54 are complementarity-determining-1; it reads GFSLSNARMG. A framework-2 region spans residues 55-71; the sequence is VSWIRQPPGKALEWLAH. The segment at 72 to 78 is complementarity-determining-2; that stretch reads IFSNDEK. Positions 79–116 are framework-3; the sequence is SYSTSLKSRLTISKDTSKSQVVLTMTNMDPVDTATYYC. Residues 117–119 are complementarity-determining-3; it reads ARI.

As to quaternary structure, immunoglobulins are composed of two identical heavy chains and two identical light chains; disulfide-linked.

The protein resides in the secreted. It localises to the cell membrane. Its function is as follows. V region of the variable domain of immunoglobulin heavy chains that participates in the antigen recognition. Immunoglobulins, also known as antibodies, are membrane-bound or secreted glycoproteins produced by B lymphocytes. In the recognition phase of humoral immunity, the membrane-bound immunoglobulins serve as receptors which, upon binding of a specific antigen, trigger the clonal expansion and differentiation of B lymphocytes into immunoglobulins-secreting plasma cells. Secreted immunoglobulins mediate the effector phase of humoral immunity, which results in the elimination of bound antigens. The antigen binding site is formed by the variable domain of one heavy chain, together with that of its associated light chain. Thus, each immunoglobulin has two antigen binding sites with remarkable affinity for a particular antigen. The variable domains are assembled by a process called V-(D)-J rearrangement and can then be subjected to somatic hypermutations which, after exposure to antigen and selection, allow affinity maturation for a particular antigen. This is Immunoglobulin heavy variable 2-26 from Homo sapiens (Human).